The following is a 308-amino-acid chain: Aspartate carbamoyltransferase catalytic subunit (308 aa).

The carbamoyl phosphate site is built by R57 and T58. An L-aspartate-binding site is contributed by K86. Residues R107, H135, and Q138 each contribute to the carbamoyl phosphate site. 2 residues coordinate L-aspartate: R168 and R229. Residues L268 and P269 each contribute to the carbamoyl phosphate site.

This sequence belongs to the aspartate/ornithine carbamoyltransferase superfamily. ATCase family. As to quaternary structure, heterooligomer of catalytic and regulatory chains.

The enzyme catalyses carbamoyl phosphate + L-aspartate = N-carbamoyl-L-aspartate + phosphate + H(+). Its pathway is pyrimidine metabolism; UMP biosynthesis via de novo pathway; (S)-dihydroorotate from bicarbonate: step 2/3. Functionally, catalyzes the condensation of carbamoyl phosphate and aspartate to form carbamoyl aspartate and inorganic phosphate, the committed step in the de novo pyrimidine nucleotide biosynthesis pathway. This chain is Aspartate carbamoyltransferase catalytic subunit, found in Pyrococcus horikoshii (strain ATCC 700860 / DSM 12428 / JCM 9974 / NBRC 100139 / OT-3).